The following is a 294-amino-acid chain: Glycine N-acyltransferase-like protein 2 (294 aa).

Lysine 19 carries the N6-acetyllysine modification.

It belongs to the glycine N-acyltransferase family. In terms of processing, acetylation at Lys-19 drastically decreases the production of N-oleoyl and N-arachidonoyl glycines. As to expression, expressed at highest levels in salivary gland and trachea. Also detected in thyroid gland, spinal cord, prostate, lung and fetal brain.

It is found in the endoplasmic reticulum. The catalysed reaction is an acyl-CoA + glycine = an N-acylglycine + CoA + H(+). It carries out the reaction (9Z)-hexadecenoyl-CoA + glycine = N-(9Z-hexadecenoyl)-glycine + CoA + H(+). The enzyme catalyses octadecanoyl-CoA + glycine = N-octadecanoylglycine + CoA + H(+). It catalyses the reaction (5Z,8Z,11Z,14Z)-eicosatetraenoyl-CoA + glycine = N-(5Z,8Z,11Z,14Z)-eicosatetraenoyl-glycine + CoA + H(+). The catalysed reaction is (9Z)-octadecenoyl-CoA + glycine = N-(9Z-octadecenoyl)glycine + CoA + H(+). It carries out the reaction octanoyl-CoA + glycine = N-octanoylglycine + CoA + H(+). The enzyme catalyses decanoyl-CoA + glycine = N-decanoylglycine + CoA + H(+). It catalyses the reaction tetradecanoyl-CoA + glycine = N-tetradecanoylglycine + CoA + H(+). The catalysed reaction is dodecanoyl-CoA + glycine = N-dodecanoylglycine + CoA + H(+). It carries out the reaction (9Z,12Z)-octadecadienoyl-CoA + glycine = N-(9Z,12Z-octadecadienoyl)-glycine + CoA + H(+). The enzyme catalyses a fatty acyl-CoA + glycine = an N-(fatty acyl)-glycine + CoA + H(+). Functionally, mitochondrial acyltransferase which transfers the acyl group to the N-terminus of glycine. Conjugates numerous substrates, such as arachidonoyl-CoA and saturated medium and long-chain acyl-CoAs ranging from chain-length C8:0-CoA to C18:0-CoA, to form a variety of N-acylglycines. Shows a preference for monounsaturated fatty acid oleoyl-CoA (C18:1-CoA) as an acyl donor. Does not exhibit any activity toward C22:6-CoA and chenodeoxycholoyl-CoA, nor toward serine or alanine. This is Glycine N-acyltransferase-like protein 2 from Homo sapiens (Human).